A 615-amino-acid polypeptide reads, in one-letter code: MTALAAVPDLQDAAGPSTTTVHSPNYSGSPADISSSPTTRAVSRNTARQTASAPPNHAESSPPGNASPTGPPSPSGNNVSPHGRHQGMSKLRACLVIATLSGVSFLNTMGSGILTVSLPTMARDVRLDDSLLLWPASVYSLAAGCTLLVFGAVGHIIGPKRVWITGACLYAAFTLGVGRSATGSQLIAFRSVLGVSIAMCLPTAVSLTTNGFGAGRWRNMAFAFQGMGQPLGYSTGLILGGIFTDTVGWRFGFYISGGINAVLAICALVVLPSPPRHDEGDGEQREVEEEATDATVAAAAVNRSSRSRPLISRLAHDVDWTGTLAISASMGFLSYVFSVVSKDYDRMAAPQNIALLVAAALLLPTFTLWVGRQERLDRPALIPNSLWRKAAFSSTCAAVFFTWAVFNAFQYFSALYFERIEHITALQTSLRFLPMVLVGAATNIVTGYLVETVEVRWLVVVSAIFSLFSPLIMALVRPGWGYWKGAFFAMLLSPLHPDVLFTVSNLIISRVYDGRSQSLAGAVFNAVSQVGNSVGLGLTAVVSSAVARSYHGSGGVGNAMDPPTGRPQHLPSSPTVEATLAGYHAAFWLMFGAAALVTVITFLGLRRGGKVGAVE.

A disordered region spans residues 1–85 (MTALAAVPDL…GNNVSPHGRH (85 aa)). Residues 16–53 (PSTTTVHSPNYSGSPADISSSPTTRAVSRNTARQTASA) show a composition bias toward polar residues. The N-linked (GlcNAc...) asparagine glycan is linked to Asn25. Helical transmembrane passes span 94 to 114 (CLVIATLSGVSFLNTMGSGIL), 138 to 158 (VYSLAAGCTLLVFGAVGHIIG), 162 to 182 (VWITGACLYAAFTLGVGRSAT), 192 to 212 (VLGVSIAMCLPTAVSLTTNGF), 222 to 242 (FAFQGMGQPLGYSTGLILGGI), and 251 to 271 (FGFYISGGINAVLAICALVVL). A glycan (N-linked (GlcNAc...) asparagine) is linked at Asn302. Helical transmembrane passes span 320 to 340 (WTGTLAISASMGFLSYVFSVV), 351 to 371 (QNIALLVAAALLLPTFTLWVG), 397 to 417 (AAVFFTWAVFNAFQYFSALYF), 432 to 452 (FLPMVLVGAATNIVTGYLVET), 455 to 475 (VRWLVVVSAIFSLFSPLIMAL), 488 to 508 (FAMLLSPLHPDVLFTVSNLII), 522 to 542 (AVFNAVSQVGNSVGLGLTAVV), and 585 to 605 (AAFWLMFGAAALVTVITFLGL).

This sequence belongs to the major facilitator superfamily. EmrB family.

Its subcellular location is the membrane. Its function is as follows. MFS-type transporter; part of the gene cluster that mediates the biosynthesis of pyriculol and pyriculariol, two heptaketides that induce lesion formation upon application on rice leaves but are dispensable for pathogenicity. With the ABC transporter ABC7, is most likely responsible for pyriculol and pyriculariol secretion and thereby may contribute to intrinsic resistance. This is MFS-type transporter 1 from Pyricularia oryzae (strain 70-15 / ATCC MYA-4617 / FGSC 8958) (Rice blast fungus).